A 105-amino-acid polypeptide reads, in one-letter code: Small ribosomal subunit protein uS10 (105 aa).

This sequence belongs to the universal ribosomal protein uS10 family. In terms of assembly, part of the 30S ribosomal subunit.

Functionally, involved in the binding of tRNA to the ribosomes. In Bdellovibrio bacteriovorus (strain ATCC 15356 / DSM 50701 / NCIMB 9529 / HD100), this protein is Small ribosomal subunit protein uS10.